We begin with the raw amino-acid sequence, 278 residues long: Elongation factor Ts (278 aa).

An involved in Mg(2+) ion dislocation from EF-Tu region spans residues 79-82 (TDFV).

Belongs to the EF-Ts family.

Its subcellular location is the cytoplasm. Associates with the EF-Tu.GDP complex and induces the exchange of GDP to GTP. It remains bound to the aminoacyl-tRNA.EF-Tu.GTP complex up to the GTP hydrolysis stage on the ribosome. This chain is Elongation factor Ts, found in Borrelia duttonii (strain Ly).